The following is a 428-amino-acid chain: Adenylosuccinate synthetase (428 aa).

Residues 13 to 19 (GDEGKGK) and 41 to 43 (GHT) contribute to the GTP site. The active-site Proton acceptor is D14. Residues D14 and G41 each contribute to the Mg(2+) site. IMP-binding positions include 14–17 (DEGK), 39–42 (NAGH), T130, R144, Q223, T238, and R302. H42 acts as the Proton donor in catalysis. Position 298 to 304 (298 to 304 (ASTGRRR)) interacts with substrate. GTP is bound by residues R304, 330–332 (KLD), and 412–414 (STG).

It belongs to the adenylosuccinate synthetase family. As to quaternary structure, homodimer. Mg(2+) serves as cofactor.

The protein resides in the cytoplasm. It catalyses the reaction IMP + L-aspartate + GTP = N(6)-(1,2-dicarboxyethyl)-AMP + GDP + phosphate + 2 H(+). Its pathway is purine metabolism; AMP biosynthesis via de novo pathway; AMP from IMP: step 1/2. In terms of biological role, plays an important role in the de novo pathway of purine nucleotide biosynthesis. Catalyzes the first committed step in the biosynthesis of AMP from IMP. The chain is Adenylosuccinate synthetase from Dichelobacter nodosus (strain VCS1703A).